A 360-amino-acid polypeptide reads, in one-letter code: Cyclin-D1-binding protein 1 (360 aa).

Position 2 is an N-acetylalanine (Ala2). Interaction with TCF3 stretches follow at residues 2-184 (ASAT…VDFV) and 150-360 (ISYN…ELEL). 2 interaction with RPLP0 regions span residues 2–190 (ASAT…AHEE) and 240–360 (LIIP…ELEL). The interval 2 to 208 (ASATAPAAAV…DPYSGLLNDT (207 aa)) is required for interaction with CCND1.

It belongs to the CCNDBP1 family. As to quaternary structure, interacts with CCND1 and GRAP2. May also interact with COPS5, RPLP0, SIRT6, SYF2 and TCF3. Post-translationally, phosphorylated. Ubiquitously expressed. Expression is down-regulated in a variety of tumor types including breast, colon, prostate and rectal tumors, and is up-regulated in certain hepatic carcinomas.

It is found in the cytoplasm. It localises to the nucleus. May negatively regulate cell cycle progression. May act at least in part via inhibition of the cyclin-D1/CDK4 complex, thereby preventing phosphorylation of RB1 and blocking E2F-dependent transcription. This chain is Cyclin-D1-binding protein 1 (CCNDBP1), found in Homo sapiens (Human).